Consider the following 499-residue polypeptide: MSDGEDHETANADDRDETVVRRDRFAGGPARSFLSSLSDDERIFAADLAVDRAHVVMLAEREIIDRETAGDVLAALADVEDAGHDALPDGEDVHEAIESAVIERVGPDGGKMHTARSRNDEVAACIRYRLREDILDLIETVVGAREQLIEVARAEDGTVMPGYTHLQPAQPTTVAHWVLSYEQALQRDTGRLLDAYERVNQNPLGSAAFAGTPFDVDRERTAALLGFDSVAENSMDASATRDFLVETTSAVATLATTLSGLAEDVVVMASKGHVALDDDYASTSSIMPQKKNPDTLELVRGRTGDAVAGLNGLLTNLKGQPRAYNRDLQRAGRHAWDAIDSVTESVEVAAGAVATADWPAETLEVAATDGFATATGVADLLAMAGVPFRTAHEVVAEAAAGLGPEEDAPDYEALSGLAEDVLGEPLSTYVDRDALEAALDPTESVAMRDSRGGPAPDAVAEQVSVAVDALAADREVLADRRQAVSQAADRRQTEVDRYV.

The segment at 1–22 (MSDGEDHETANADDRDETVVRR) is disordered. The span at 7-22 (HETANADDRDETVVRR) shows a compositional bias: basic and acidic residues.

Belongs to the lyase 1 family. Argininosuccinate lyase subfamily.

Its subcellular location is the cytoplasm. It carries out the reaction 2-(N(omega)-L-arginino)succinate = fumarate + L-arginine. Its pathway is amino-acid biosynthesis; L-arginine biosynthesis; L-arginine from L-ornithine and carbamoyl phosphate: step 3/3. This chain is Argininosuccinate lyase, found in Haloarcula marismortui (strain ATCC 43049 / DSM 3752 / JCM 8966 / VKM B-1809) (Halobacterium marismortui).